The following is a 307-amino-acid chain: Coproporphyrin III ferrochelatase (307 aa).

Fe-coproporphyrin III contacts are provided by residues tyrosine 12, arginine 29, arginine 45–tyrosine 46, serine 53, and tyrosine 124. Residues histidine 181 and glutamate 263 each coordinate Fe(2+).

It belongs to the ferrochelatase family.

Its subcellular location is the cytoplasm. It carries out the reaction Fe-coproporphyrin III + 2 H(+) = coproporphyrin III + Fe(2+). It functions in the pathway porphyrin-containing compound metabolism; protoheme biosynthesis. Functionally, involved in coproporphyrin-dependent heme b biosynthesis. Catalyzes the insertion of ferrous iron into coproporphyrin III to form Fe-coproporphyrin III. The chain is Coproporphyrin III ferrochelatase from Staphylococcus saprophyticus subsp. saprophyticus (strain ATCC 15305 / DSM 20229 / NCIMB 8711 / NCTC 7292 / S-41).